The chain runs to 340 residues: HTH-type transcriptional regulator VirS (340 aa).

In terms of domain architecture, HTH araC/xylS-type spans 236-334; that stretch reads ERVVGLARRL…GMTPRQYRAY (99 aa). DNA-binding regions (H-T-H motif) lie at residues 254–275 and 301–324; these read EAIADQLDMHPRTLQRRLAAEG and LSQIAVLLGYSEQSALNRSCRRWF.

Post-translationally, phosphorylated by PknK. Phosphorylation increases affinity for the mymA promoter.

Functionally, regulates the expression of the mymA operon. This chain is HTH-type transcriptional regulator VirS (virS), found in Mycobacterium tuberculosis (strain CDC 1551 / Oshkosh).